A 36-amino-acid polypeptide reads, in one-letter code: Toxin Iob1 (36 aa).

3 disulfides stabilise this stretch: Cys-6–Cys-21, Cys-13–Cys-26, and Cys-20–Cys-33.

It is found in the secreted. In terms of biological role, binds reversibly and blocks N-type voltage-gated calcium channels (Cav). The protein is Toxin Iob1 of Isyndus obscurus (Assassin bug).